The following is a 647-amino-acid chain: MAQGSVSFKDVTVDFSQEEWQHLDPAQKTLYMDVMLENYCHLISVGCHMTKPDVILKLERGEEPWTSFKGHTCLEENWKAEDFLLKFKEQQDKYSRSVILINHKKLVNENGSTCEKTLTLSKNPINSKKLPPEYDTREKILKNVSELIISNLSPTRRRLSECNGYGKSLLNTKPETAHSGVKSHNQCGRTISHNEKITQYHKMETPAQSFEYNDCEKAFLKRGGPVTHSRTYRRGNTSDYNKRRRTTNIEKKHTCTECGKSFCRKSVLILHQGIHTEEKPYQCHQCGNSFRRKSYLIDHQRTHTGEKPFVCNECGKSFRLKTALTDHQRTHTGEKSYECPQCRNAFRLKSHLIRHQRTHTGEKPYECSDCGKSFRQKTTLSLHQRIHTGEKPYICKECGKSFHQKANLTVHQRTHTGEKPYICNECGKSFSQKTTLALHEKTHNEEKPYICNECGKSFPQKTTLVAHQRTHTGEKSYECPHCGKAFRMKSYLIDHHRTHTGEKPYECNECGKSFSQKTNLNLHQRIHTGEKPYICNECGKSFRQKATLTVHQKIHTGQKSYECPQCGKAFSRKSYLIHHQRTHTGEKPYKCSECGKCFRQKTNLIVHQRTHTGEKPYICNECGKSFSYKRNLIVHQRTHKGENMEMQ.

The region spanning 32-77 (MDVMLENYCHLISVGCHMTKPDVILKLERGEEPWTSFKGHTCLEEN) is the KRAB domain. Glycyl lysine isopeptide (Lys-Gly) (interchain with G-Cter in SUMO2) cross-links involve residues Lys173, Lys202, and Lys217. The segment at 210-232 (FEYNDCEKAFLKRGGPVTHSRTY) adopts a C2H2-type 1; degenerate zinc-finger fold. 7 C2H2-type zinc fingers span residues 253–275 (HTCTECGKSFCRKSVLILHQGIH), 281–303 (YQCHQCGNSFRRKSYLIDHQRTH), 309–331 (FVCNECGKSFRLKTALTDHQRTH), 337–359 (YECPQCRNAFRLKSHLIRHQRTH), 365–387 (YECSDCGKSFRQKTTLSLHQRIH), 393–415 (YICKECGKSFHQKANLTVHQRTH), and 421–443 (YICNECGKSFSQKTTLALHEKTH). Lys447 is covalently cross-linked (Glycyl lysine isopeptide (Lys-Gly) (interchain with G-Cter in SUMO2)). 7 C2H2-type zinc fingers span residues 449–471 (YICNECGKSFPQKTTLVAHQRTH), 477–499 (YECPHCGKAFRMKSYLIDHHRTH), 505–527 (YECNECGKSFSQKTNLNLHQRIH), 533–555 (YICNECGKSFRQKATLTVHQKIH), 561–583 (YECPQCGKAFSRKSYLIHHQRTH), 589–611 (YKCSECGKCFRQKTNLIVHQRTH), and 617–639 (YICNECGKSFSYKRNLIVHQRTH).

It belongs to the krueppel C2H2-type zinc-finger protein family.

The protein resides in the nucleus. May be involved in transcriptional regulation. The polypeptide is Zinc finger protein 567 (ZNF567) (Bos taurus (Bovine)).